The sequence spans 359 residues: 4-galactosyl-N-acetylglucosaminide 3-alpha-L-fucosyltransferase FUT6 (359 aa).

Topologically, residues 1–14 (MDPLGPAKPQWSCR) are cytoplasmic. The helical; Signal-anchor for type II membrane protein transmembrane segment at 15–34 (CCLTTLLFQLLVAVCFFSYL) threads the bilayer. Over 35-359 (RVSRDDPTVY…QTRSITAWFT (325 aa)) the chain is Lumenal. 4 N-linked (GlcNAc...) asparagine glycosylation sites follow: N46, N91, N153, and N184. The segment at 73–112 (KPTALPRCSEMLPGTADCNITADRKVYPQADAVIVHHREV) is determines site-specific fucosylation.

The protein belongs to the glycosyltransferase 10 family. In terms of assembly, homodimer and monomer. Monomer (secreted form). N-glycosylated. In terms of processing, proteolytic cleavage releases a secreted glycoform of 43 kDa.

The protein localises to the golgi apparatus. The protein resides in the golgi stack membrane. Its subcellular location is the secreted. The enzyme catalyses a beta-D-galactosyl-(1-&gt;4)-N-acetyl-beta-D-glucosaminyl derivative + GDP-beta-L-fucose = a beta-D-galactosyl-(1-&gt;4)-[alpha-L-fucosyl-(1-&gt;3)]-N-acetyl-beta-D-glucosaminyl derivative + GDP + H(+). It catalyses the reaction an N-acetyl-alpha-neuraminyl-(2-&gt;3)-beta-D-galactosyl-(1-&gt;4)-N-acetyl-beta-D-glucosaminyl derivative + GDP-beta-L-fucose = an alpha-Neu5Ac-(2-&gt;3)-beta-D-Gal-(1-&gt;4)-[alpha-L-Fuc-(1-&gt;3)]-beta-D-GlcNAc derivative + GDP + H(+). The catalysed reaction is an alpha-Neu5Ac-(2-&gt;3)-beta-D-Gal-(1-&gt;4)-beta-D-GlcNAc-(1-&gt;3)-beta-D-Gal-(1-&gt;4)-[alpha-L-Fuc-(1-&gt;3)]-beta-D-GlcNAc derivative + GDP-beta-L-fucose = an alpha-Neu5Ac-(2-&gt;3)-beta-D-Gal-(1-&gt;4)-[alpha-L-Fuc-(1-&gt;3)]-beta-D-GlcNAc-(1-&gt;3)-beta-D-Gal-(1-&gt;4)-[alpha-L-Fuc-(1-&gt;3)]-beta-D-GlcNAc derivative + GDP + H(+). It carries out the reaction a neolactoside nLc6Cer + GDP-beta-L-fucose = beta-D-Gal-(1-&gt;4)-[alpha-L-Fuc-(1-&gt;3)]-beta-D-GlcNAc-(1-&gt;3)-beta-D-Gal-(1-&gt;4)-beta-D-GlcNAc-(1-&gt;3)-beta-D-Gal-(1-&gt;4)-beta-D-Glc-(1&lt;-&gt;1')-Cer + GDP + H(+). The enzyme catalyses a neolactoside nLc6Cer + GDP-beta-L-fucose = beta-D-galactosyl-(1-&gt;4)-N-acetyl-beta-D-glucosaminyl-(1-&gt;3)-beta-D-galactosyl-(1-&gt;4)-[alpha-L-fucosyl-(1-&gt;3)]-N-acetyl-beta-D-glucosaminyl-(1-&gt;3)-beta-D-galactosyl-(1-&gt;4)-beta-D-glucosyl-(1&lt;-&gt;1')-ceramide + GDP + H(+). It catalyses the reaction a neolactoside VI(3)-alpha-NeuNAc-nLc6Cer + GDP-beta-L-fucose = a neolactoside VI(3)-alpha-NeuAc,V(3)-alphaFuc-nLc6Cer + GDP + H(+). The catalysed reaction is beta-D-galactosyl-(1-&gt;4)-N-acetyl-D-glucosamine + GDP-beta-L-fucose = beta-D-galactosyl-(1-&gt;4)-[alpha-L-fucosyl-(1-&gt;3)]-N-acetyl-D-glucosamine + GDP + H(+). It carries out the reaction N-acetyl-alpha-neuraminosyl-(2-&gt;3)-beta-D-galactosyl-(1-&gt;4)-N-acetyl-beta-D-glucosamine + GDP-beta-L-fucose = N-acetyl-alpha-neuraminosyl-(2-&gt;3)-beta-D-galactosyl-(1-&gt;4)-[alpha-L-fucosyl-(1-&gt;3)]-N-acetyl-beta-D-glucosamine + GDP + H(+). The enzyme catalyses lactose + GDP-beta-L-fucose = beta-D-galactosyl-(1-&gt;4)-[alpha-L-fucosyl-(1-&gt;3)]-D-glucose + GDP + H(+). It catalyses the reaction alpha-L-Fuc-(1-&gt;2)-beta-D-Gal-(1-&gt;4)-D-Glc + GDP-beta-L-fucose = alpha-L-Fuc-(1-&gt;2)-beta-D-Gal-(1-&gt;4)-[alpha-L-Fuc-(1-&gt;3)]-D-Glc + GDP + H(+). The catalysed reaction is a beta-D-galactosyl-(1-&gt;4)-N-acetyl-beta-D-6-sulfooxy-glucosaminyl derivative + GDP-beta-L-fucose = a beta-D-galactosyl-(1-&gt;4)-[alpha-L-fucosyl-(1-&gt;3)]-N-acetyl-beta-D-6-sulfooxy-glucosaminyl derivative + GDP + H(+). Its pathway is protein modification; protein glycosylation. Catalyzes the transfer of L-fucose, from a guanosine diphosphate-beta-L-fucose, to the N-acetyl glucosamine (GlcNAc) of a distal alpha2,3 sialylated lactosamine unit of a glycoprotein- or glycolipid-linked sialopolylactosamines chain or of a distal or internal lactosamine unit of a neutral glycoprotein- or glycolipid-linked polylactosamines chain through an alpha-1,3 glycosidic linkage and participates in surface expression of the sialyl Lewis X (sLe(x)), Lewis X (Le(x)) and non sialylated VIM2 determinants. Moreover transfers fucose to H-type 2 (Fucalpha1-2Galbeta1-4GlcNAc) chain acceptor substrates and participates in difucosylated sialyl Lewis x determinants. Also fucosylates a polylactosamine substrate having a 6 sulfate modification at the GlcNAc moiety and gives rise to sialyl and non-sialyl 6-sulfo lewis X. Does not have activity towards type 1 ((Galbeta1-3GlcNAc)) and H-type 1 chain (Fucalpha1-2Galbeta1-3GlcNAc) acceptors substrates. This is 4-galactosyl-N-acetylglucosaminide 3-alpha-L-fucosyltransferase FUT6 from Gorilla gorilla gorilla (Western lowland gorilla).